Consider the following 511-residue polypeptide: Sodium/proline symporter (511 aa).

The next 13 helical transmembrane spans lie at 16-36, 54-74, 85-105, 139-159, 175-195, 199-219, 246-266, 284-304, 327-347, 381-401, 407-427, 438-458, and 467-487; these read WQTYVMIIVYFIILLIIGFYG, IGPYITALSAGASDMSGWMIM, LSAIWITIGLTLGAYINYFVV, IISGLIIVVFFTLYTHSGFVS, GLLIVAIIVIFYTFFGGYLAV, DFFQGVIMLIAMVMVPIVALL, VLGIVSLFSWGLGYFGQPHII, LGISWMAVGLLGAIGVGLTGI, ILFHPLVGGFLLAAILAAIMS, FVLIGRLSVLLVAIVAITIAW, ILNLVGNAWAGFGAAFSPLVL, AGAISGMVAGAVVVIVWISWI, and FFGMYEIIPGFIISVLITYIV.

It belongs to the sodium:solute symporter (SSF) (TC 2.A.21) family.

The protein resides in the cell membrane. The enzyme catalyses L-proline(in) + Na(+)(in) = L-proline(out) + Na(+)(out). Catalyzes the sodium-dependent uptake of extracellular L-proline. The sequence is that of Sodium/proline symporter (putP) from Staphylococcus epidermidis (strain ATCC 12228 / FDA PCI 1200).